The sequence spans 429 residues: Enolase (429 aa).

Q162 contributes to the (2R)-2-phosphoglycerate binding site. The Proton donor role is filled by E204. Residues D241, E283, and D310 each contribute to the Mg(2+) site. (2R)-2-phosphoglycerate contacts are provided by K335, R364, S365, and K386. K335 (proton acceptor) is an active-site residue.

This sequence belongs to the enolase family. Mg(2+) serves as cofactor.

The protein localises to the cytoplasm. It localises to the secreted. Its subcellular location is the cell surface. It catalyses the reaction (2R)-2-phosphoglycerate = phosphoenolpyruvate + H2O. It participates in carbohydrate degradation; glycolysis; pyruvate from D-glyceraldehyde 3-phosphate: step 4/5. Catalyzes the reversible conversion of 2-phosphoglycerate (2-PG) into phosphoenolpyruvate (PEP). It is essential for the degradation of carbohydrates via glycolysis. The chain is Enolase from Mycobacterium avium (strain 104).